Consider the following 663-residue polypeptide: Guanine nucleotide exchange factor subunit RGP1 (663 aa).

Serine 351, serine 354, serine 357, serine 363, serine 364, and serine 370 each carry phosphoserine. A disordered region spans residues 412–443 (GKDEDSSDPEPNDSHFSNEMVTSAESSLRSDA). Polar residues predominate over residues 426–440 (HFSNEMVTSAESSLR).

This sequence belongs to the RGP1 family. As to quaternary structure, forms a complex with RIC1.

The protein resides in the golgi apparatus. In terms of biological role, the RIC1-RGP1 complex acts as a guanine nucleotide exchange factor (GEF), which activates YPT6 by exchanging bound GDP for free GTP. It is thereby required for efficient fusion of endosome-derived vesicles with the Golgi. The RIC1-RGP1 participates in the recycling of SNC1, presumably by mediating fusion of endosomal vesicles with the Golgi compartment. Required for proper mitotic growth. This chain is Guanine nucleotide exchange factor subunit RGP1, found in Saccharomyces cerevisiae (strain ATCC 204508 / S288c) (Baker's yeast).